We begin with the raw amino-acid sequence, 115 residues long: Small ribosomal subunit protein uS17 (115 aa).

This sequence belongs to the universal ribosomal protein uS17 family. In terms of assembly, part of the 30S ribosomal subunit.

One of the primary rRNA binding proteins, it binds specifically to the 5'-end of 16S ribosomal RNA. This chain is Small ribosomal subunit protein uS17, found in Granulibacter bethesdensis (strain ATCC BAA-1260 / CGDNIH1).